We begin with the raw amino-acid sequence, 577 residues long: Probable cytochrome c biosynthesis protein (577 aa).

Belongs to the CcmF/CycK/Ccl1/NrfE/CcsA family.

It localises to the mitochondrion. Could be involved in assembly and maturation of cytochromes c. May play a role in guidance of apocytochromes and heme groups for the covalent linkage introduced by the cytochrome-c-heme lyase. This is Probable cytochrome c biosynthesis protein from Oenothera berteroana (Bertero's evening primrose).